Here is a 457-residue protein sequence, read N- to C-terminus: ATP synthase subunit beta (457 aa).

ATP is bound at residue 147-154 (GGAGVGKT).

This sequence belongs to the ATPase alpha/beta chains family. F-type ATPases have 2 components, CF(1) - the catalytic core - and CF(0) - the membrane proton channel. CF(1) has five subunits: alpha(3), beta(3), gamma(1), delta(1), epsilon(1). CF(0) has three main subunits: a(1), b(2) and c(9-12). The alpha and beta chains form an alternating ring which encloses part of the gamma chain. CF(1) is attached to CF(0) by a central stalk formed by the gamma and epsilon chains, while a peripheral stalk is formed by the delta and b chains.

It is found in the cell inner membrane. It carries out the reaction ATP + H2O + 4 H(+)(in) = ADP + phosphate + 5 H(+)(out). In terms of biological role, produces ATP from ADP in the presence of a proton gradient across the membrane. The catalytic sites are hosted primarily by the beta subunits. The protein is ATP synthase subunit beta of Haemophilus influenzae (strain PittGG).